Consider the following 178-residue polypeptide: Ribosome maturation factor RimM (178 aa).

The PRC barrel domain maps to 101-178 (EGEFYWYQLQ…EMRVDWDADF (78 aa)).

Belongs to the RimM family. In terms of assembly, binds ribosomal protein uS19.

The protein resides in the cytoplasm. Its function is as follows. An accessory protein needed during the final step in the assembly of 30S ribosomal subunit, possibly for assembly of the head region. Essential for efficient processing of 16S rRNA. May be needed both before and after RbfA during the maturation of 16S rRNA. It has affinity for free ribosomal 30S subunits but not for 70S ribosomes. This chain is Ribosome maturation factor RimM, found in Ectopseudomonas mendocina (strain ymp) (Pseudomonas mendocina).